The primary structure comprises 805 residues: Centrosomal protein of 85 kDa-like (805 aa).

2 disordered regions span residues 1–27 and 50–89; these read MWGR…AGPD and RNNH…LSFK. Serine 15 bears the Phosphoserine mark. The segment covering 60-74 has biased composition (polar residues); the sequence is ASDSGDTGIGTSCSD. At serine 207 the chain carries Phosphoserine. A coiled-coil region spans residues 439-682; that stretch reads SQQGEFEQKL…LENQRQTDET (244 aa).

The protein belongs to the CEP85 family. Isoform 1 and isoform 4 are expressed in spleen, lymph, thymus, tonsil and peripheral blood leukocytes, with isoform 1 expressed at higher levels. Isoform 4 is detected in K-562 leukemia cells and in the blood of precursor T lymphoblastic lymphoma (T-ALL) patients.

Its subcellular location is the cytoplasm. The protein resides in the cytoskeleton. The protein localises to the microtubule organizing center. It localises to the centrosome. Functionally, plays an essential role in neuronal cell migration. The polypeptide is Centrosomal protein of 85 kDa-like (Homo sapiens (Human)).